We begin with the raw amino-acid sequence, 410 residues long: Peptidase T (410 aa).

Residue His-78 coordinates Zn(2+). Asp-80 is a catalytic residue. Zn(2+) is bound at residue Asp-140. Glu-173 serves as the catalytic Proton acceptor. Zn(2+) contacts are provided by Glu-174, Asp-196, and His-379.

It belongs to the peptidase M20B family. Requires Zn(2+) as cofactor.

The protein resides in the cytoplasm. The enzyme catalyses Release of the N-terminal residue from a tripeptide.. Cleaves the N-terminal amino acid of tripeptides. The sequence is that of Peptidase T from Pectobacterium atrosepticum (strain SCRI 1043 / ATCC BAA-672) (Erwinia carotovora subsp. atroseptica).